The following is a 643-amino-acid chain: Pesticidal crystal protein Cry11Aa (643 aa).

It belongs to the delta endotoxin family.

In terms of biological role, promotes colloidosmotic lysis by binding to the midgut epithelial cells of mosquitos. The sequence is that of Pesticidal crystal protein Cry11Aa (cry11Aa) from Bacillus thuringiensis subsp. israelensis.